The chain runs to 506 residues: MPLLGLLPRRAWASLLSQLLRPPCASCTGAVRCQSQVAEAVLTSQLKAHQEKPNFIIKTPKGTRDLSPQHMVVREKILDLVISCFKRHGAKGMDTPAFELKETLTEKYGEDSGLMYDLKDQGGELLSLRYDLTVPFARYLAMNKVKKMKRYHVGKVWRRESPTIVQGRYREFCQCDFDIAGQFDPMIPDAECLKIMCEILSGLQLGDFLIKVNDRRIVDGMFAVCGVPESKFRAICSSIDKLDKMAWKDVRHEMVVKKGLAPEVADRIGDYVQCHGGVSLVEQMFQDPRLSQNKQALEGLGDLKLLFEYLTLFGIADKISFDLSLARGLDYYTGVIYEAVLLQTPTQAGEEPLNVGSVAAGGRYDGLVGMFDPKGHKVPCVGLSIGVERIFYIVEQRMKTKGEKVRTTETQVFVATPQKNFLQERLKLIAELWDSGIKAEMLYKNNPKLLTQLHYCESTGIPLVVIIGEQELKEGVIKIRSVASREEVAIKRENFVAEIQKRLSES.

Residues 1 to 33 (MPLLGLLPRRAWASLLSQLLRPPCASCTGAVRC) constitute a mitochondrion transit peptide. At Ser-67 the chain carries Phosphoserine. L-histidine-binding positions include 131 to 133 (DLT), Arg-158, Gln-174, Asp-178, Arg-327, and 331 to 332 (YY). Lys-444 is modified (N6-acetyllysine).

This sequence belongs to the class-II aminoacyl-tRNA synthetase family. In terms of assembly, homodimer. In terms of tissue distribution, a high level expression is seen in the heart, kidney and skeletal muscle while a lower level expression is seen in the brain and liver.

The protein localises to the mitochondrion. It carries out the reaction tRNA(His) + L-histidine + ATP = L-histidyl-tRNA(His) + AMP + diphosphate + H(+). Its function is as follows. Mitochondrial aminoacyl-tRNA synthetase that catalyzes the ATP-dependent ligation of histidine to the 3'-end of its cognate tRNA, via the formation of an aminoacyl-adenylate intermediate (His-AMP). The chain is Histidine--tRNA ligase, mitochondrial (HARS2) from Homo sapiens (Human).